Consider the following 264-residue polypeptide: Non-homologous end-joining factor xrc4 (264 aa).

Over residues 173–186 the composition is skewed to basic and acidic residues; that stretch reads RNNEDNEDNHHINY. Positions 173–264 are disordered; the sequence is RNNEDNEDNH…SHESSETVSE (92 aa). Polar residues predominate over residues 200–209; it reads QEGVNSSAVS. A compositionally biased stretch (basic and acidic residues) spans 248-264; the sequence is DDSHRRSSHESSETVSE.

It belongs to the XRCC4-XLF family. XRCC4 subfamily. As to quaternary structure, interacts with lig4; the interaction is direct.

The protein localises to the nucleus. Its function is as follows. Involved in double-strand break repair via non-homologous end joining (NHEJ); the repair of a double-strand break in DNA in which the two broken ends are rejoined with little or no sequence complementarity. The polypeptide is Non-homologous end-joining factor xrc4 (Schizosaccharomyces pombe (strain 972 / ATCC 24843) (Fission yeast)).